Here is a 126-residue protein sequence, read N- to C-terminus: Non-specific lipid-transfer protein 13 (126 aa).

Positions 1–20 (MDTHTTKLVAISLLLLLVIS) are cleaved as a signal peptide. 4 disulfide bridges follow: Cys36–Cys85, Cys46–Cys61, Cys62–Cys109, and Cys83–Cys123.

Belongs to the plant LTP family.

Functionally, plant non-specific lipid-transfer proteins transfer phospholipids as well as galactolipids across membranes. May play a role in wax or cutin deposition in the cell walls of expanding epidermal cells and certain secretory tissues. The polypeptide is Non-specific lipid-transfer protein 13 (LTP13) (Arabidopsis thaliana (Mouse-ear cress)).